We begin with the raw amino-acid sequence, 147 residues long: Large ribosomal subunit protein uL15 (147 aa).

Residues 1-58 form a disordered region; it reads MKLFELKPAPGAKKRPKRVGRGESSGHGKTSTRGHKGQWARSGGGVRPGFEGGQMPLT. The segment covering 42–52 has biased composition (gly residues); the sequence is SGGGVRPGFEG.

This sequence belongs to the universal ribosomal protein uL15 family. As to quaternary structure, part of the 50S ribosomal subunit.

In terms of biological role, binds to the 23S rRNA. This Caldicellulosiruptor saccharolyticus (strain ATCC 43494 / DSM 8903 / Tp8T 6331) protein is Large ribosomal subunit protein uL15.